The following is a 234-amino-acid chain: LexA repressor (234 aa).

A DNA-binding region (H-T-H motif) is located at residues Phe26–Thr46. Residues Ala73–Asn107 form a disordered region. Residues Ser155 and Lys192 each act as for autocatalytic cleavage activity in the active site.

This sequence belongs to the peptidase S24 family. Homodimer.

The enzyme catalyses Hydrolysis of Ala-|-Gly bond in repressor LexA.. Represses a number of genes involved in the response to DNA damage (SOS response), including recA and lexA. In the presence of single-stranded DNA, RecA interacts with LexA causing an autocatalytic cleavage which disrupts the DNA-binding part of LexA, leading to derepression of the SOS regulon and eventually DNA repair. The polypeptide is LexA repressor (Caulobacter vibrioides (strain ATCC 19089 / CIP 103742 / CB 15) (Caulobacter crescentus)).